The chain runs to 348 residues: Protein RecA (348 aa).

Residue 65 to 72 (GPESSGKT) participates in ATP binding.

This sequence belongs to the RecA family.

The protein localises to the cytoplasm. Functionally, can catalyze the hydrolysis of ATP in the presence of single-stranded DNA, the ATP-dependent uptake of single-stranded DNA by duplex DNA, and the ATP-dependent hybridization of homologous single-stranded DNAs. It interacts with LexA causing its activation and leading to its autocatalytic cleavage. The protein is Protein RecA of Vibrio anguillarum (Listonella anguillarum).